A 1295-amino-acid polypeptide reads, in one-letter code: Phosphoribosylformylglycinamidine synthase (1295 aa).

The disordered stretch occupies residues 302-327; sequence SPWPGASTGSGGEIRDEGATGRGAKP. ATP is bound by residues 306–317 and Ala677; that span reads GASTGSGGEIRD. Mg(2+)-binding residues include Asp678, Glu717, Asn721, and Asp884. ATP is bound at residue Ser886. Residues 1042 to 1295 enclose the Glutamine amidotransferase type-1 domain; it reads VAVLREQGVN…IFRNARKQLG (254 aa). Cys1135 functions as the Nucleophile in the catalytic mechanism. Active-site residues include His1260 and Glu1262.

It in the N-terminal section; belongs to the FGAMS family. As to quaternary structure, monomer.

It localises to the cytoplasm. The enzyme catalyses N(2)-formyl-N(1)-(5-phospho-beta-D-ribosyl)glycinamide + L-glutamine + ATP + H2O = 2-formamido-N(1)-(5-O-phospho-beta-D-ribosyl)acetamidine + L-glutamate + ADP + phosphate + H(+). Its pathway is purine metabolism; IMP biosynthesis via de novo pathway; 5-amino-1-(5-phospho-D-ribosyl)imidazole from N(2)-formyl-N(1)-(5-phospho-D-ribosyl)glycinamide: step 1/2. Phosphoribosylformylglycinamidine synthase involved in the purines biosynthetic pathway. Catalyzes the ATP-dependent conversion of formylglycinamide ribonucleotide (FGAR) and glutamine to yield formylglycinamidine ribonucleotide (FGAM) and glutamate. This is Phosphoribosylformylglycinamidine synthase from Photorhabdus laumondii subsp. laumondii (strain DSM 15139 / CIP 105565 / TT01) (Photorhabdus luminescens subsp. laumondii).